A 160-amino-acid polypeptide reads, in one-letter code: Ribosomal RNA large subunit methyltransferase H (160 aa).

S-adenosyl-L-methionine is bound by residues leucine 76, glycine 108, and 127-132 (LGKMTW).

Belongs to the RNA methyltransferase RlmH family. Homodimer.

Its subcellular location is the cytoplasm. The enzyme catalyses pseudouridine(1915) in 23S rRNA + S-adenosyl-L-methionine = N(3)-methylpseudouridine(1915) in 23S rRNA + S-adenosyl-L-homocysteine + H(+). Its function is as follows. Specifically methylates the pseudouridine at position 1915 (m3Psi1915) in 23S rRNA. The polypeptide is Ribosomal RNA large subunit methyltransferase H (Rhizobium etli (strain CIAT 652)).